A 279-amino-acid chain; its full sequence is Large ribosomal subunit protein uL2 (279 aa).

Residues 224–279 (AMNPIDHPHGGGEGRTSGGRHPVTPWGKGTKGNRTRKSKASDKLIVRSRHAKKKGR) form a disordered region. Residues 269-279 (VRSRHAKKKGR) show a composition bias toward basic residues.

Belongs to the universal ribosomal protein uL2 family. Part of the 50S ribosomal subunit. Forms a bridge to the 30S subunit in the 70S ribosome.

In terms of biological role, one of the primary rRNA binding proteins. Required for association of the 30S and 50S subunits to form the 70S ribosome, for tRNA binding and peptide bond formation. It has been suggested to have peptidyltransferase activity; this is somewhat controversial. Makes several contacts with the 16S rRNA in the 70S ribosome. This Cereibacter sphaeroides (strain ATCC 17025 / ATH 2.4.3) (Rhodobacter sphaeroides) protein is Large ribosomal subunit protein uL2.